The primary structure comprises 443 residues: UPF0656 protein C926.02 (443 aa).

It belongs to the UPF0656 family.

The protein resides in the cytoplasm. The protein localises to the nucleus. The chain is UPF0656 protein C926.02 from Schizosaccharomyces pombe (strain 972 / ATCC 24843) (Fission yeast).